The primary structure comprises 330 residues: Delta-aminolevulinic acid dehydratase (330 aa).

Positions 122, 124, 131, and 132 each coordinate Zn(2+). The active-site Schiff-base intermediate with substrate is Lys-199. Lys-199 is modified (N6-succinyllysine). Position 209 (Arg-209) interacts with 5-aminolevulinate. Ser-215 carries the phosphoserine modification. Arg-221 contributes to the 5-aminolevulinate binding site. Residue Cys-223 participates in Zn(2+) binding. Catalysis depends on Lys-252, which acts as the Schiff-base intermediate with substrate. Lys-252 carries the N6-succinyllysine modification. Residues Ser-279 and Tyr-318 each contribute to the 5-aminolevulinate site.

The protein belongs to the ALAD family. As to quaternary structure, homooctamer; active form. Homohexamer; low activity form. Requires Zn(2+) as cofactor.

It is found in the cytoplasm. The protein resides in the cytosol. The catalysed reaction is 2 5-aminolevulinate = porphobilinogen + 2 H2O + H(+). It functions in the pathway porphyrin-containing compound metabolism; protoporphyrin-IX biosynthesis; coproporphyrinogen-III from 5-aminolevulinate: step 1/4. With respect to regulation, can alternate between a fully active homooctamer and a low-activity homohexamer. A bound magnesium ion may promote the assembly of the fully active homooctamer. The magnesium-binding site is absent in the low-activity homohexamer. Inhibited by compounds that favor the hexameric state. Inhibited by divalent lead ions. The lead ions partially displace the zinc cofactor. In terms of biological role, catalyzes an early step in the biosynthesis of tetrapyrroles. Binds two molecules of 5-aminolevulinate per subunit, each at a distinct site, and catalyzes their condensation to form porphobilinogen. This Macaca fascicularis (Crab-eating macaque) protein is Delta-aminolevulinic acid dehydratase (ALAD).